Consider the following 967-residue polypeptide: Probable disease resistance protein At1g61190 (967 aa).

Residues 20–68 (RCLCGKGYIRNLEKNLRALQREMEDLRATQHEVQNKVAREESRHQQRLE) adopt a coiled-coil conformation. The disordered stretch occupies residues 132-153 (GNFDEVSQPPPRSEVEERPTQP). The NB-ARC domain occupies 138 to 441 (SQPPPRSEVE…CEGFIGEDQV (304 aa)). Position 180–187 (180–187 (GMGGVGKT)) interacts with ATP. 5 LRR repeats span residues 516–537 (AVRRMSLMMNEIEEITCESKCS), 538–559 (ELTTLFLQSNQLKNLSGEFIRY), 562–585 (KLVVLDLSHNPDFNELPEQISGLV), 586–608 (SLQYLDLSWTRIEQLPVGLKELK), and 609–631 (KLIFLNLCFTERLCSISGISRLL).

Belongs to the disease resistance NB-LRR family.

In terms of biological role, probable disease resistance protein. The chain is Probable disease resistance protein At1g61190 from Arabidopsis thaliana (Mouse-ear cress).